A 68-amino-acid chain; its full sequence is Probable tautomerase HP_0924 (68 aa).

The active-site Proton acceptor; via imino nitrogen is the proline 2.

This sequence belongs to the 4-oxalocrotonate tautomerase family.

The sequence is that of Probable tautomerase HP_0924 from Helicobacter pylori (strain ATCC 700392 / 26695) (Campylobacter pylori).